The sequence spans 214 residues: ATP phosphoribosyltransferase (214 aa).

It belongs to the ATP phosphoribosyltransferase family. Short subfamily. As to quaternary structure, heteromultimer composed of HisG and HisZ subunits.

The protein localises to the cytoplasm. The enzyme catalyses 1-(5-phospho-beta-D-ribosyl)-ATP + diphosphate = 5-phospho-alpha-D-ribose 1-diphosphate + ATP. It functions in the pathway amino-acid biosynthesis; L-histidine biosynthesis; L-histidine from 5-phospho-alpha-D-ribose 1-diphosphate: step 1/9. Its function is as follows. Catalyzes the condensation of ATP and 5-phosphoribose 1-diphosphate to form N'-(5'-phosphoribosyl)-ATP (PR-ATP). Has a crucial role in the pathway because the rate of histidine biosynthesis seems to be controlled primarily by regulation of HisG enzymatic activity. In Ruminiclostridium cellulolyticum (strain ATCC 35319 / DSM 5812 / JCM 6584 / H10) (Clostridium cellulolyticum), this protein is ATP phosphoribosyltransferase.